We begin with the raw amino-acid sequence, 371 residues long: MFPKIMNDENFFKKAAAHGEEPPLTPQNEHQRSGLRFARRVRLPRAVGLAGMFLPIASTLVSHPPPGWWWLVLVGWAFVWPHLAWQIASRAVDPLSREIYNLKTDAVLAGMWVGVMGVNVLPSTAMLMIMCLNLMGAGGPRLFVAGLVLMVVSCLVTLELTGITVSFNSAPLEWWLSLPIIVIYPLLFGWVSYQTATKLAEHKRRLQVMSTRDGMTGVYNRRHWETMLRNEFDNCRRHNRDATLLIIDIDHFKSINDTWGHDVGDEAIVALTRQLQITLRGSDVIGRFGGDEFAVIMSGTPAESAITAMLRVHEGLNTLRLPNTPQVTLRISVGVAPLNPQMSHYREWLKSADLALYKAKKAGRNRTEVAA.

5 helical membrane-spanning segments follow: residues 46-66, 68-88, 112-132, 143-163, and 171-191; these read AVGL…HPPP, WWWL…WQIA, WVGV…IMCL, FVAG…LTGI, and PLEW…FGWV. A GGDEF domain is found at 240–371; sequence RDATLLIIDI…AGRNRTEVAA (132 aa). Positions 248 and 249 each coordinate Mg(2+). The substrate site is built by N256 and D265. D291 serves as a coordination point for Mg(2+).

The cofactor is Mg(2+).

The protein resides in the cell inner membrane. It carries out the reaction 2 GTP = 3',3'-c-di-GMP + 2 diphosphate. It functions in the pathway purine metabolism; 3',5'-cyclic di-GMP biosynthesis. Its function is as follows. A probable diguanylate cyclase. The last member of a cascade of expressed proteins, its expression requires DgcM. DgcC production induces biosynthesis of cellulose in some E.coli isolates, but not in K12 strains. Cyclic-di-GMP is a second messenger which controls cell surface-associated traits in bacteria. In Escherichia coli (strain K12), this protein is Probable diguanylate cyclase DgcC.